The primary structure comprises 145 residues: GGYYGYPYGVVGAVHDTPEVAAAKAAHFAAVAAAGGAAAVPLYGGAYVGAHDDGQYHPGLYGDEGQYHSHYDGGYVGYAGGYDDGQYRPGLYGDEGQYHGEGYAGHYAGPIAGVPVIVNGVPADTPAVAAAKAAHFAAHAHAAHY.

The chain is Cuticle protein 5 from Blaberus craniifer (Death's head cockroach).